We begin with the raw amino-acid sequence, 137 residues long: MLKEFKEFALKGNMVDLAIGVIIGGAFGGLVNSIVNDIIMPIIGLITGGIDFSNMFIQLAGEPRATLAAAREAGATIAYGNFVTLLINFLIIAWVLFLVVKGMNRMKKKEEAKPEPEAPREEVLLTEIRDLLAKQKA.

A run of 3 helical transmembrane segments spans residues 15–35 (VDLAIGVIIGGAFGGLVNSIV), 38–58 (IIMPIIGLITGGIDFSNMFIQ), and 80–100 (GNFVTLLINFLIIAWVLFLVV).

The protein belongs to the MscL family. In terms of assembly, homopentamer.

It localises to the cell inner membrane. Its function is as follows. Channel that opens in response to stretch forces in the membrane lipid bilayer. May participate in the regulation of osmotic pressure changes within the cell. The chain is Large-conductance mechanosensitive channel from Brucella anthropi (strain ATCC 49188 / DSM 6882 / CCUG 24695 / JCM 21032 / LMG 3331 / NBRC 15819 / NCTC 12168 / Alc 37) (Ochrobactrum anthropi).